A 308-amino-acid chain; its full sequence is D-alanine--D-alanine ligase (308 aa).

The 198-residue stretch at 105 to 302 (KAIFRSLGLA…FPDLCERILD (198 aa)) folds into the ATP-grasp domain. Position 133–188 (133–188 (DLPFGLPCVVKPAGEGSSVGVHLVNEAAELGPACRDAASHAGDVIVERYVKGTEVD)) interacts with ATP. Mg(2+)-binding residues include aspartate 256, glutamate 269, and asparagine 271.

This sequence belongs to the D-alanine--D-alanine ligase family. It depends on Mg(2+) as a cofactor. The cofactor is Mn(2+).

The protein resides in the cytoplasm. The catalysed reaction is 2 D-alanine + ATP = D-alanyl-D-alanine + ADP + phosphate + H(+). It functions in the pathway cell wall biogenesis; peptidoglycan biosynthesis. Functionally, cell wall formation. The protein is D-alanine--D-alanine ligase of Anaeromyxobacter dehalogenans (strain 2CP-1 / ATCC BAA-258).